Here is a 168-residue protein sequence, read N- to C-terminus: Ribosome maturation factor RimM (168 aa).

The PRC barrel domain maps to 95–168 (KEGDYYWTDL…IIVVEWDADF (74 aa)).

This sequence belongs to the RimM family. As to quaternary structure, binds ribosomal protein uS19.

It localises to the cytoplasm. An accessory protein needed during the final step in the assembly of 30S ribosomal subunit, possibly for assembly of the head region. Essential for efficient processing of 16S rRNA. May be needed both before and after RbfA during the maturation of 16S rRNA. It has affinity for free ribosomal 30S subunits but not for 70S ribosomes. In Coxiella burnetii (strain CbuK_Q154) (Coxiella burnetii (strain Q154)), this protein is Ribosome maturation factor RimM.